Here is a 488-residue protein sequence, read N- to C-terminus: Probable glycine dehydrogenase (decarboxylating) subunit 2 (488 aa).

K274 carries the N6-(pyridoxal phosphate)lysine modification.

This sequence belongs to the GcvP family. C-terminal subunit subfamily. As to quaternary structure, the glycine cleavage system is composed of four proteins: P, T, L and H. In this organism, the P 'protein' is a heterodimer of two subunits. Requires pyridoxal 5'-phosphate as cofactor.

The enzyme catalyses N(6)-[(R)-lipoyl]-L-lysyl-[glycine-cleavage complex H protein] + glycine + H(+) = N(6)-[(R)-S(8)-aminomethyldihydrolipoyl]-L-lysyl-[glycine-cleavage complex H protein] + CO2. The glycine cleavage system catalyzes the degradation of glycine. The P protein binds the alpha-amino group of glycine through its pyridoxal phosphate cofactor; CO(2) is released and the remaining methylamine moiety is then transferred to the lipoamide cofactor of the H protein. The chain is Probable glycine dehydrogenase (decarboxylating) subunit 2 from Listeria monocytogenes serotype 4a (strain HCC23).